The primary structure comprises 165 residues: Nucleotide-binding protein P9211_04811 (165 aa).

Belongs to the YajQ family.

Functionally, nucleotide-binding protein. The chain is Nucleotide-binding protein P9211_04811 from Prochlorococcus marinus (strain MIT 9211).